Here is a 122-residue protein sequence, read N- to C-terminus: LYR motif-containing protein 1 (122 aa).

It belongs to the complex I LYR family. In terms of tissue distribution, high levels in adipose tissue.

The protein resides in the nucleus. May promote cell proliferation and inhibition of apoptosis of preadipocytes. In Homo sapiens (Human), this protein is LYR motif-containing protein 1 (LYRM1).